The primary structure comprises 670 residues: Transcription factor vib-1 (670 aa).

The segment at residues 106 to 341 (TEMVQDLRDD…RSPRNFQARK (236 aa)) is a DNA-binding region (NDT80). Composition is skewed to polar residues over residues 394 to 438 (FTSA…TTSM) and 553 to 568 (LGNSSSDISPQSQHHP). Disordered stretches follow at residues 394–457 (FTSA…SYTA) and 496–670 (SAPP…WNAT). The span at 592–605 (ASAPASAPTSAAPP) shows a compositional bias: low complexity. The segment covering 611 to 631 (PSQSWTSTAGEGQTSSYTNGG) has biased composition (polar residues).

The protein localises to the nucleus. The protein resides in the cytoplasm. Functionally, transcription factor that acts as a positive regulator of nonrepressible acid phosphatase activity. Is a major regulator of responses to nitrogen and carbon starvation and is essential for the expression of genes involved in vegetative incompatibility (like pin-c, het-6, and tol). Vegetative incompatibility is a non-self-recognition system ubiquitous in filamentous fungi which results in programmed cell death. The polypeptide is Transcription factor vib-1 (vib-1) (Neurospora crassa (strain ATCC 24698 / 74-OR23-1A / CBS 708.71 / DSM 1257 / FGSC 987)).